The following is a 144-amino-acid chain: Maximins 3/H2 (144 aa).

Positions 1-18 (MNFKYIVAVSFLIASAYA) are cleaved as a signal peptide. Propeptides lie at residues 19-43 (RSVQNDEQSLSQRDVLEEESLREIR) and 74-123 (TAEE…KEKR). Isoleucine 143 is subject to Isoleucine amide.

It belongs to the bombinin family. As to expression, expressed by the skin glands.

It is found in the secreted. Maximin-3 shows antibacterial activity against both Gram-positive and Gram-negative bacteria. It also shows antimicrobial activity against the fungus C.albicans, but not against A.flavus nor P.uticale. It has little hemolytic activity. It possess a significant cytotoxicity against tumor cell lines. It possess a significant anti-HIV activity. It shows high spermicidal activity. Its function is as follows. Maximin-H2 shows antibacterial activity against both Gram-positive and Gram-negative bacteria. It also shows antimicrobial activity against the fungus C.albicans. Shows strong hemolytic activity. This chain is Maximins 3/H2, found in Bombina maxima (Giant fire-bellied toad).